The primary structure comprises 170 residues: Protein ECM34 (170 aa).

Asn45 carries N-linked (GlcNAc...) asparagine glycosylation. A run of 2 helical transmembrane segments spans residues 51–71 (IWLLLCLTLIVGWKVFSGIGG) and 98–118 (TIVILVISLAVSFSWEAFKMY).

The protein belongs to the DUP/COS family.

Its subcellular location is the membrane. May be involved in cell wall organization and biogenesis. The polypeptide is Protein ECM34 (ECM34) (Saccharomyces cerevisiae (strain ATCC 204508 / S288c) (Baker's yeast)).